An 878-amino-acid polypeptide reads, in one-letter code: Aminopeptidase M1-C (878 aa).

Residues 102–209 (LGEGVLAMDF…MSTYLVAIVV (108 aa)) are required for membrane association. Substrate is bound by residues E142 and 275–279 (GAMEN). A Zn(2+)-binding site is contributed by H311. E312 (proton acceptor) is an active-site residue. Positions 315 and 334 each coordinate Zn(2+). A Dileucine internalization motif motif is present at residues 726-727 (LL).

The protein belongs to the peptidase M1 family. In terms of assembly, homodimer. The cofactor is Zn(2+).

It is found in the membrane. Its subcellular location is the microsome membrane. The protein localises to the cytoplasm. The enzyme catalyses Release of an N-terminal amino acid, Xaa-|-Yaa- from a peptide, amide or arylamide. Xaa is preferably Ala, but may be most amino acids including Pro (slow action). When a terminal hydrophobic residue is followed by a prolyl residue, the two may be released as an intact Xaa-Pro dipeptide.. The sequence is that of Aminopeptidase M1-C from Oryza sativa subsp. japonica (Rice).